Consider the following 60-residue polypeptide: Mannitol-specific phosphotransferase enzyme IIA component (60 aa).

The PTS EIIA type-2 domain maps to 2 to 60 (SELFSNDNIFLNVNVNSQNEAIEKAGKALVDSGAVTDAYIQVVSTFMGNGLAIPHGTDD). Residue H56 is the Tele-phosphohistidine intermediate of the active site. H56 carries the phosphohistidine; by HPr modification.

Homodimer or homotrimer. Seems to be a monomer when not phosphorylated.

It localises to the cytoplasm. Functionally, the phosphoenolpyruvate-dependent sugar phosphotransferase system (sugar PTS), a major carbohydrate active transport system, catalyzes the phosphorylation of incoming sugar substrates concomitantly with their translocation across the cell membrane. The enzyme II CmtAB PTS system is involved in D-mannitol transport. The polypeptide is Mannitol-specific phosphotransferase enzyme IIA component (Staphylococcus aureus).